Reading from the N-terminus, the 159-residue chain is Phosphopantetheine adenylyltransferase (159 aa).

Residue Thr-9 coordinates substrate. Residues 9–10 and His-17 each bind ATP; that span reads TF. Positions 41, 73, and 87 each coordinate substrate. Residues 88–90, Glu-98, and 123–129 contribute to the ATP site; these read GLR and YSYISST.

The protein belongs to the bacterial CoaD family. As to quaternary structure, homohexamer. It depends on Mg(2+) as a cofactor.

The protein resides in the cytoplasm. The catalysed reaction is (R)-4'-phosphopantetheine + ATP + H(+) = 3'-dephospho-CoA + diphosphate. The protein operates within cofactor biosynthesis; coenzyme A biosynthesis; CoA from (R)-pantothenate: step 4/5. Reversibly transfers an adenylyl group from ATP to 4'-phosphopantetheine, yielding dephospho-CoA (dPCoA) and pyrophosphate. In Azotobacter vinelandii (strain DJ / ATCC BAA-1303), this protein is Phosphopantetheine adenylyltransferase.